The following is a 213-amino-acid chain: Imidazole glycerol phosphate synthase subunit HisH (213 aa).

Residues 1 to 212 (MLAILDYKAG…HRYCTEAADA (212 aa)) enclose the Glutamine amidotransferase type-1 domain. The active-site Nucleophile is Cys79. Active-site residues include His187 and Glu189.

Heterodimer of HisH and HisF.

It localises to the cytoplasm. It catalyses the reaction 5-[(5-phospho-1-deoxy-D-ribulos-1-ylimino)methylamino]-1-(5-phospho-beta-D-ribosyl)imidazole-4-carboxamide + L-glutamine = D-erythro-1-(imidazol-4-yl)glycerol 3-phosphate + 5-amino-1-(5-phospho-beta-D-ribosyl)imidazole-4-carboxamide + L-glutamate + H(+). The catalysed reaction is L-glutamine + H2O = L-glutamate + NH4(+). The protein operates within amino-acid biosynthesis; L-histidine biosynthesis; L-histidine from 5-phospho-alpha-D-ribose 1-diphosphate: step 5/9. Functionally, IGPS catalyzes the conversion of PRFAR and glutamine to IGP, AICAR and glutamate. The HisH subunit catalyzes the hydrolysis of glutamine to glutamate and ammonia as part of the synthesis of IGP and AICAR. The resulting ammonia molecule is channeled to the active site of HisF. This chain is Imidazole glycerol phosphate synthase subunit HisH, found in Nitratidesulfovibrio vulgaris (strain ATCC 29579 / DSM 644 / CCUG 34227 / NCIMB 8303 / VKM B-1760 / Hildenborough) (Desulfovibrio vulgaris).